Reading from the N-terminus, the 191-residue chain is Imidazoleglycerol-phosphate dehydratase (191 aa).

The protein belongs to the imidazoleglycerol-phosphate dehydratase family.

The protein localises to the cytoplasm. The catalysed reaction is D-erythro-1-(imidazol-4-yl)glycerol 3-phosphate = 3-(imidazol-4-yl)-2-oxopropyl phosphate + H2O. It participates in amino-acid biosynthesis; L-histidine biosynthesis; L-histidine from 5-phospho-alpha-D-ribose 1-diphosphate: step 6/9. The polypeptide is Imidazoleglycerol-phosphate dehydratase (Methanosarcina mazei (strain ATCC BAA-159 / DSM 3647 / Goe1 / Go1 / JCM 11833 / OCM 88) (Methanosarcina frisia)).